The following is a 557-amino-acid chain: Hepatocyte nuclear factor 1-beta (557 aa).

The tract at residues 1–31 (MVSKLTSLQQELLSALLSSGVTKEVLVQALE) is dimerization. Positions 1–32 (MVSKLTSLQQELLSALLSSGVTKEVLVQALEE) constitute an HNF-p1 domain. 4 positions are modified to phosphoserine: serine 49, serine 52, serine 75, and serine 80. A disordered region spans residues 64–85 (TLTNGHAKGRLSGDEGSEDGDD). A POU-specific atypical domain is found at 93–188 (KELQALNTEE…ILRQFNQTVQ (96 aa)). The homeobox; HNF1-type DNA-binding region spans 231–311 (MRRNRFKWGP…NRRKEEAFRQ (81 aa)). Residues 324 to 370 (HSLNPLLSHGSPHHQPSSSPPNKLSGVRYSQQGNNEVTSSSTISHHG) are disordered. Residues 328-344 (PLLSHGSPHHQPSSSPP) are compositionally biased toward low complexity. Residues 351 to 370 (RYSQQGNNEVTSSSTISHHG) are compositionally biased toward polar residues.

Belongs to the HNF1 homeobox family. In terms of assembly, binds DNA as a dimer. Can form homodimer or heterodimer with HNF1-alpha. Interacts (via HNF-p1 domain) with PCBD1; the interaction increases its transactivation activity.

The protein localises to the nucleus. Transcription factor that binds to the inverted palindrome 5'-GTTAATNATTAAC-3'. Binds to the FPC element in the cAMP regulatory unit of the PLAU gene. Transcriptional activity is increased by coactivator PCBD1. In Pongo abelii (Sumatran orangutan), this protein is Hepatocyte nuclear factor 1-beta (HNF1B).